A 449-amino-acid polypeptide reads, in one-letter code: uncharacterized protein (449 aa).

The span at 1 to 13 (MPKAPKTKLHHAP) shows a compositional bias: basic residues. Positions 1 to 125 (MPKAPKTKLH…SQEEEEYEEL (125 aa)) are disordered. Residue S22 is modified to Phosphoserine. Residues 73–84 (KPSQISAFISNG) show a composition bias toward polar residues. Residue S156 is modified to Phosphoserine.

It belongs to the bystin family.

This is an uncharacterized protein from Schizosaccharomyces pombe (strain 972 / ATCC 24843) (Fission yeast).